Reading from the N-terminus, the 468-residue chain is 6-phospho-beta-galactosidase (468 aa).

5 residues coordinate D-galactose 6-phosphate: glutamine 19, histidine 116, asparagine 159, glutamate 160, and asparagine 297. Glutamate 160 serves as the catalytic Proton donor. The active-site Nucleophile is glutamate 375. The D-galactose 6-phosphate site is built by serine 428, tryptophan 429, lysine 435, and tyrosine 437.

It belongs to the glycosyl hydrolase 1 family.

It catalyses the reaction a 6-phospho-beta-D-galactoside + H2O = D-galactose 6-phosphate + an alcohol. It participates in carbohydrate metabolism; lactose degradation; D-galactose 6-phosphate and beta-D-glucose from lactose 6-phosphate: step 1/1. The sequence is that of 6-phospho-beta-galactosidase from Streptococcus pyogenes serotype M28 (strain MGAS6180).